The following is a 158-amino-acid chain: UPF0225 protein Pfl01_1218 (158 aa).

The protein belongs to the UPF0225 family.

This is UPF0225 protein Pfl01_1218 from Pseudomonas fluorescens (strain Pf0-1).